The chain runs to 324 residues: NADH-cytochrome b5 reductase 2 (324 aa).

A helical transmembrane segment spans residues 31-47; the sequence is IPLIGGITLAAGAGYYY. The region spanning 70 to 178 is the FAD-binding FR-type domain; it reads QGWIGLKLAH…KGPLPKYPWE (109 aa). 181–216 provides a ligand contact to FAD; sequence KHDHICLIAGGTGITPMYQLVRKIFSNPEDKTKVTL.

This sequence belongs to the flavoprotein pyridine nucleotide cytochrome reductase family. The cofactor is FAD.

It localises to the mitochondrion outer membrane. The catalysed reaction is 2 Fe(III)-[cytochrome b5] + NADH = 2 Fe(II)-[cytochrome b5] + NAD(+) + H(+). In terms of biological role, may mediate the reduction of outer membrane cytochrome b5. The protein is NADH-cytochrome b5 reductase 2 (MCR1) of Ajellomyces capsulatus (strain NAm1 / WU24) (Darling's disease fungus).